The primary structure comprises 213 residues: Orotate phosphoribosyltransferase (213 aa).

K26 is a binding site for 5-phospho-alpha-D-ribose 1-diphosphate. 34 to 35 (FF) contacts orotate. 5-phospho-alpha-D-ribose 1-diphosphate is bound by residues 72 to 73 (YK), R99, K100, K103, H105, and 124 to 132 (DDVITAGTA). Residues T128 and R156 each coordinate orotate.

Belongs to the purine/pyrimidine phosphoribosyltransferase family. PyrE subfamily. Homodimer. Requires Mg(2+) as cofactor.

It catalyses the reaction orotidine 5'-phosphate + diphosphate = orotate + 5-phospho-alpha-D-ribose 1-diphosphate. The protein operates within pyrimidine metabolism; UMP biosynthesis via de novo pathway; UMP from orotate: step 1/2. In terms of biological role, catalyzes the transfer of a ribosyl phosphate group from 5-phosphoribose 1-diphosphate to orotate, leading to the formation of orotidine monophosphate (OMP). The sequence is that of Orotate phosphoribosyltransferase from Shigella flexneri serotype 5b (strain 8401).